The following is a 260-amino-acid chain: 14-3-3 protein 4 (260 aa).

Residues 238–260 (DNADDVGDDIKEASKPESGEGQQ) are disordered. Residues 245 to 260 (DDIKEASKPESGEGQQ) show a composition bias toward basic and acidic residues.

The protein belongs to the 14-3-3 family. Homodimer.

The sequence is that of 14-3-3 protein 4 (TFT4) from Solanum lycopersicum (Tomato).